The primary structure comprises 80 residues: Small ribosomal subunit protein bS18A (80 aa).

This sequence belongs to the bacterial ribosomal protein bS18 family. In terms of assembly, part of the 30S ribosomal subunit. Forms a tight heterodimer with protein bS6.

Binds as a heterodimer with protein bS6 to the central domain of the 16S rRNA, where it helps stabilize the platform of the 30S subunit. The polypeptide is Small ribosomal subunit protein bS18A (Rhodococcus jostii (strain RHA1)).